Consider the following 980-residue polypeptide: LRR receptor-like serine/threonine-protein kinase SIK1 (980 aa).

A signal peptide spans M1 to A24. Over A25–T588 the chain is Extracellular. 2 N-linked (GlcNAc...) asparagine glycosylation sites follow: N72 and N81. LRR repeat units follow at residues F75 to L98, K99 to C122, S124 to L146, K147 to I170, P171 to N194, V196 to L218, T219 to C242, T243 to F265, L266 to M289, Q290 to N312, S314 to M337, S338 to L361, E362 to C385, A387 to K408, L409 to I433, N435 to L457, E458 to N480, L481 to L505, N507 to C529, and S531 to K554. N230 and N241 each carry an N-linked (GlcNAc...) asparagine glycan. N-linked (GlcNAc...) asparagine glycans are attached at residues N312 and N336. Residues N381, N399, and N416 are each glycosylated (N-linked (GlcNAc...) asparagine). 2 N-linked (GlcNAc...) asparagine glycosylation sites follow: N464 and N493. N-linked (GlcNAc...) asparagine glycosylation is found at N536, N541, N551, and N584. A helical transmembrane segment spans residues A589–Y609. The Cytoplasmic segment spans residues K610 to M980. The region spanning L653 to L923 is the Protein kinase domain. ATP contacts are provided by residues I659–V667 and K681. The active-site Proton acceptor is the D778.

This sequence belongs to the protein kinase superfamily. Ser/Thr protein kinase family. Autophosphorylated. In terms of tissue distribution, expressed in nodes, vascular bundles of stems, and anthers.

It localises to the cell membrane. The enzyme catalyses L-seryl-[protein] + ATP = O-phospho-L-seryl-[protein] + ADP + H(+). It carries out the reaction L-threonyl-[protein] + ATP = O-phospho-L-threonyl-[protein] + ADP + H(+). Receptor kinase involved in salt drought stress responses. Acts as a positive regulator of salt and drought tolerance. May promote salt and drought tolerance through the induction of the activities of antioxidative enzymes, such as peroxidase, superoxide dismutase and catalase. May be involved in the control of stomatal development in leaf epidermis. Possesses kinase activity in vitro. Does not seem to be involved in heat tolerance. The polypeptide is LRR receptor-like serine/threonine-protein kinase SIK1 (Oryza sativa subsp. japonica (Rice)).